We begin with the raw amino-acid sequence, 202 residues long: ATP synthase subunit b (202 aa).

A helical transmembrane segment spans residues 9 to 29 (TTLSLCLAVCVVVIAVGTGWA).

The protein belongs to the ATPase B chain family. F-type ATPases have 2 components, F(1) - the catalytic core - and F(0) - the membrane proton channel. F(1) has five subunits: alpha(3), beta(3), gamma(1), delta(1), epsilon(1). F(0) has three main subunits: a(1), b(2) and c(10-14). The alpha and beta chains form an alternating ring which encloses part of the gamma chain. F(1) is attached to F(0) by a central stalk formed by the gamma and epsilon chains, while a peripheral stalk is formed by the delta and b chains.

It localises to the cell inner membrane. F(1)F(0) ATP synthase produces ATP from ADP in the presence of a proton or sodium gradient. F-type ATPases consist of two structural domains, F(1) containing the extramembraneous catalytic core and F(0) containing the membrane proton channel, linked together by a central stalk and a peripheral stalk. During catalysis, ATP synthesis in the catalytic domain of F(1) is coupled via a rotary mechanism of the central stalk subunits to proton translocation. Functionally, component of the F(0) channel, it forms part of the peripheral stalk, linking F(1) to F(0). This chain is ATP synthase subunit b, found in Pelobacter propionicus (strain DSM 2379 / NBRC 103807 / OttBd1).